The primary structure comprises 172 residues: Large ribosomal subunit protein uL10 (172 aa).

The protein belongs to the universal ribosomal protein uL10 family. In terms of assembly, part of the ribosomal stalk of the 50S ribosomal subunit. The N-terminus interacts with L11 and the large rRNA to form the base of the stalk. The C-terminus forms an elongated spine to which L12 dimers bind in a sequential fashion forming a multimeric L10(L12)X complex.

Its function is as follows. Forms part of the ribosomal stalk, playing a central role in the interaction of the ribosome with GTP-bound translation factors. The chain is Large ribosomal subunit protein uL10 (rplJ) from Liberibacter africanus subsp. capensis.